Here is a 382-residue protein sequence, read N- to C-terminus: L-arabinitol 4-dehydrogenase (382 aa).

Cys55, His80, Glu81, Cys110, Cys113, Cys116, Cys124, and Glu165 together coordinate Zn(2+). Residues 192 to 193, Asp213, Arg218, Ile293, and 317 to 319 each bind NAD(+); these read PI and QYR.

It belongs to the zinc-containing alcohol dehydrogenase family. In terms of assembly, homotetramer. Zn(2+) serves as cofactor.

The enzyme catalyses L-arabinitol + NAD(+) = L-xylulose + NADH + H(+). Its pathway is carbohydrate degradation; L-arabinose degradation via L-arabinitol; D-xylulose 5-phosphate from L-arabinose (fungal route): step 2/5. Its function is as follows. Catalyzes the NAD-dependent oxidation of L-arabinitol to L-xylulose in the fungal L-arabinose catabolic pathway. L-arabinose catabolism is important for using plant material as a carbon source. Also active on ribitol and xylitol. Not active with NADP as cosubstrate. This Aspergillus oryzae (Yellow koji mold) protein is L-arabinitol 4-dehydrogenase (ladA).